A 215-amino-acid chain; its full sequence is Adenylate kinase (215 aa).

10 to 15 (GAGKGT) provides a ligand contact to ATP. The tract at residues 30-59 (STGDMFRAAIKEGTELGKQAKALMDQGKLV) is NMP. Residues Thr-31, Arg-36, 57–59 (KLV), 85–88 (GFPR), and Gln-92 each bind AMP. The segment at 122–159 (GRRVHQPSGRTYHIIYNPPKVAGQDDITGEELITRADD) is LID. ATP is bound by residues Arg-123 and 132–133 (TY). The AMP site is built by Arg-156 and Arg-167. Position 200 (Lys-200) interacts with ATP.

The protein belongs to the adenylate kinase family. In terms of assembly, monomer.

It localises to the cytoplasm. The catalysed reaction is AMP + ATP = 2 ADP. The protein operates within purine metabolism; AMP biosynthesis via salvage pathway; AMP from ADP: step 1/1. Functionally, catalyzes the reversible transfer of the terminal phosphate group between ATP and AMP. Plays an important role in cellular energy homeostasis and in adenine nucleotide metabolism. This is Adenylate kinase from Haemophilus ducreyi (strain 35000HP / ATCC 700724).